Consider the following 97-residue polypeptide: Zinc metalloproteinase-disintegrin-like bothrojarin-4 (97 aa).

Residues 4–90 enclose the Disintegrin domain; it reads PPVCGNYFVE…DCPTDRFRRN (87 aa). Ca(2+) contacts are provided by Val6, Asn9, Phe11, Glu13, Glu16, and Asp19. Disulfide bonds link Cys7-Cys36, Cys18-Cys31, Cys20-Cys26, Cys30-Cys53, Cys44-Cys50, Cys49-Cys75, and Cys62-Cys82. N-linked (GlcNAc...) asparagine glycosylation is present at Asn32. The short motif at 68-70 is the D/ECD-tripeptide; atypical (KCD) element; that stretch reads KCD.

This sequence belongs to the venom metalloproteinase (M12B) family. P-III subfamily. P-IIIa sub-subfamily. As to quaternary structure, monomer. Zn(2+) serves as cofactor. As to expression, expressed by the venom gland.

It localises to the secreted. The hemorrhagic metalloproteinase-disintegrin-like bothrojarin-1 is a potent inhibitor of collagen-induced platelet aggregation by blockage of alpha-2/beta-1 (ITGA2/ITGB1) integrin. It does not present any fibrinogen-clotting activity. This Bothrops jararaca (Jararaca) protein is Zinc metalloproteinase-disintegrin-like bothrojarin-4.